The primary structure comprises 309 residues: Taste receptor type 2 member 8 (309 aa).

Residues Met-1–Asn-7 lie on the Extracellular side of the membrane. Residues Ile-8–Ala-28 traverse the membrane as a helical segment. Residues Leu-29 to Asn-50 lie on the Cytoplasmic side of the membrane. Residues Leu-51–Leu-71 form a helical membrane-spanning segment. Residues Asn-72–Gln-82 lie on the Extracellular side of the membrane. The chain crosses the membrane as a helical span at residues Ile-83 to Leu-103. The Cytoplasmic portion of the chain corresponds to Asn-104–His-131. Residues Trp-132–Leu-152 traverse the membrane as a helical segment. Topologically, residues Ser-153–Thr-184 are extracellular. Asn-167 carries N-linked (GlcNAc...) asparagine glycosylation. A helical transmembrane segment spans residues Leu-185–Val-205. Residues Arg-206–Ser-239 are Cytoplasmic-facing. The helical transmembrane segment at Phe-240 to Met-260 threads the bilayer. Residues Thr-261–Ala-266 are Extracellular-facing. The chain crosses the membrane as a helical span at residues Val-267 to Val-287. The Cytoplasmic portion of the chain corresponds to Leu-288 to Ile-309.

It belongs to the G-protein coupled receptor T2R family. Expressed in subsets of taste receptor cells of the tongue and palate epithelium and exclusively in gustducin-positive cells.

Its subcellular location is the membrane. In terms of biological role, receptor that may play a role in the perception of bitterness and is gustducin-linked. May play a role in sensing the chemical composition of the gastrointestinal content. The activity of this receptor may stimulate alpha gustducin, mediate PLC-beta-2 activation and lead to the gating of TRPM5. The protein is Taste receptor type 2 member 8 (TAS2R8) of Homo sapiens (Human).